Consider the following 566-residue polypeptide: Amino acid transporter 6-1 (566 aa).

Helical transmembrane passes span 65-85 (YVLLLLYSIVVFTTGAVFYGW), 137-157 (MTFAVACLMSAGAGTLLDWLG), 158-178 (PLWTELLGQLLNLVGWLFLAF), 187-207 (YPALVFIGLGADASMLPTLCI), 216-236 (GLIITILGSAASASFGIPLVL), 250-270 (VSIGYCFFGPVLGVLVALLFM), 334-354 (FFSIRYFLIVLYFVVVSWATS), 367-387 (DVVSVIEVLLPLSFIPCILLG), 392-412 (VVGIIRVLFVMNTSGLLTYVF), 423-443 (LSACCFMVYMSLLTSQVYVYV), and 455-475 (LIGISNLTGGLLSLVSNPLYE). The N-linked (GlcNAc...) asparagine glycan is linked to Asn-476. Residues 489 to 509 (IQIAMTALLCVQYVWIFILGF) form a helical membrane-spanning segment.

It belongs to the SLC43A transporter (TC 2.A.1.44) family.

It is found in the cell membrane. The enzyme catalyses L-lysine(in) = L-lysine(out). It catalyses the reaction L-arginine(in) = L-arginine(out). The catalysed reaction is L-methionine(in) = L-methionine(out). It carries out the reaction L-leucine(in) = L-leucine(out). Functionally, cationic and neutral amino acid transporter. Transports lysine with high affinity. Can transport arginine, methionine and leucine. Does not require inorganic ions, such as sodium, chloride, potassium, calcium or magnesium, for transport activity. This is Amino acid transporter 6-1 from Toxoplasma gondii (strain ATCC 50611 / Me49).